A 421-amino-acid chain; its full sequence is tRNA (guanine(37)-N(1))-methyltransferase (421 aa).

Residues R198, 242–243, 270–271, and N293 contribute to the S-adenosyl-L-methionine site; these read DL and DA.

Belongs to the class I-like SAM-binding methyltransferase superfamily. TRM5/TYW2 family. In terms of assembly, monomer.

It localises to the mitochondrion matrix. The protein resides in the nucleus. Its subcellular location is the cytoplasm. It catalyses the reaction guanosine(37) in tRNA + S-adenosyl-L-methionine = N(1)-methylguanosine(37) in tRNA + S-adenosyl-L-homocysteine + H(+). Its function is as follows. Specifically methylates the N1 position of guanosine-37 in various cytoplasmic and mitochondrial tRNAs. Methylation is not dependent on the nature of the nucleoside 5' of the target nucleoside. This is the first step in the biosynthesis of wybutosine (yW), a modified base adjacent to the anticodon of tRNAs and required for accurate decoding. This chain is tRNA (guanine(37)-N(1))-methyltransferase, found in Paramecium tetraurelia.